Consider the following 349-residue polypeptide: tRNA pseudouridine synthase D (349 aa).

Residue Phe-27 coordinates substrate. The active-site Nucleophile is Asp-80. Residue Asn-129 coordinates substrate. The TRUD domain maps to Gly-155 to Leu-303. Phe-329 is a substrate binding site.

This sequence belongs to the pseudouridine synthase TruD family.

It catalyses the reaction uridine(13) in tRNA = pseudouridine(13) in tRNA. In terms of biological role, responsible for synthesis of pseudouridine from uracil-13 in transfer RNAs. This Escherichia coli O8 (strain IAI1) protein is tRNA pseudouridine synthase D.